The primary structure comprises 852 residues: Protein SEY1 (852 aa).

The Cytoplasmic segment spans residues 1–738 (MNGHFAAVGN…KRSAIGGITQ (738 aa)). Positions 47-283 (GFNYHLISVF…FVGGVFLPEY (237 aa)) constitute a GB1/RHD3-type G domain. 57-64 (GSQSTGKS) is a GTP binding site. Residues 475 to 500 (QYRLFEKELDEVSARLRKEEMRRLAI) are a coiled coil. The helical transmembrane segment at 739-759 (VPLYFYIVLLIFGWNEIVMVL) threads the bilayer. Residues 760–762 (RNP) are Lumenal-facing. Residues 763-783 (MLFMLLLVMGGGTYVAYTLNL) form a helical membrane-spanning segment. At 784–852 (LGPMMQMANA…AQEVEEDDDI (69 aa)) the chain is on the cytoplasmic side. The tract at residues 825 to 852 (RSQDNGIGMDRLDSRGKKAQEVEEDDDI) is disordered. Positions 834–845 (DRLDSRGKKAQE) are enriched in basic and acidic residues.

This sequence belongs to the TRAFAC class dynamin-like GTPase superfamily. GB1/RHD3 GTPase family. RHD3 subfamily.

It localises to the endoplasmic reticulum membrane. Cooperates with the reticulon proteins and tubule-shaping DP1 family proteins to generate and maintain the structure of the tubular endoplasmic reticulum network. Has GTPase activity, which is required for its function in ER organization. This is Protein SEY1 from Chaetomium globosum (strain ATCC 6205 / CBS 148.51 / DSM 1962 / NBRC 6347 / NRRL 1970) (Soil fungus).